The primary structure comprises 597 residues: Arginine--tRNA ligase (597 aa).

The short motif at 137-147 is the 'HIGH' region element; sequence PNIAKEMHVGH.

The protein belongs to the class-I aminoacyl-tRNA synthetase family. Monomer.

The protein localises to the cytoplasm. The enzyme catalyses tRNA(Arg) + L-arginine + ATP = L-arginyl-tRNA(Arg) + AMP + diphosphate. This Parasynechococcus marenigrum (strain WH8102) protein is Arginine--tRNA ligase.